We begin with the raw amino-acid sequence, 869 residues long: Eukaryotic translation initiation factor 3 subunit C (869 aa).

Disordered stretches follow at residues 1–92 and 182–242; these read MSRF…KSAK and IKKA…VGKG. Acidic residues predominate over residues 14 to 55; it reads SSDEEEDLYSDDEEVQEQPEEESSEDDSEEDDDDDDDSDSSS. The segment covering 185-203 has biased composition (basic and acidic residues); the sequence is ASKEHQKDIDSFRADKDAY. The PCI domain occupies 607 to 781; it reads FHMHINLELL…SSIIFRKGVE (175 aa). The segment at 803–869 is disordered; it reads NERTLETRTQ…ALGAAVGSRA (67 aa). Over residues 823 to 843 the composition is skewed to gly residues; sequence GRGGRGGNRGGRGGGRGGRGG.

The protein belongs to the eIF-3 subunit C family. In terms of assembly, component of the eukaryotic translation initiation factor 3 (eIF-3) complex.

It localises to the cytoplasm. Component of the eukaryotic translation initiation factor 3 (eIF-3) complex, which is involved in protein synthesis of a specialized repertoire of mRNAs and, together with other initiation factors, stimulates binding of mRNA and methionyl-tRNAi to the 40S ribosome. The eIF-3 complex specifically targets and initiates translation of a subset of mRNAs involved in cell proliferation. This Botryotinia fuckeliana (strain B05.10) (Noble rot fungus) protein is Eukaryotic translation initiation factor 3 subunit C (nip1).